The following is a 136-amino-acid chain: Large ribosomal subunit protein eL27 (136 aa).

Residues 5–40 (MKPGKVVMVLAGRYAGRKAVIVKNIDDGTADRPYSH) enclose the KOW domain.

It belongs to the eukaryotic ribosomal protein eL27 family. Component of the large ribosomal subunit.

The protein localises to the cytoplasm. The protein resides in the cytosol. It is found in the rough endoplasmic reticulum. Component of the large ribosomal subunit. This is Large ribosomal subunit protein eL27 (rpl27) from Hippocampus comes (Tiger tail seahorse).